Consider the following 367-residue polypeptide: UDP-D-xylose:L-fucose alpha-1,3-D-xylosyltransferase (367 aa).

Over residues 1–10 (MAQKQQTLHQ) the composition is skewed to polar residues. Residues 1–21 (MAQKQQTLHQQRPFSSSPRSY) are disordered. Topologically, residues 1 to 35 (MAQKQQTLHQQRPFSSSPRSYSSISNRPIFLLSRN) are cytoplasmic. The span at 12–21 (RPFSSSPRSY) shows a compositional bias: low complexity. A helical; Signal-anchor for type II membrane protein membrane pass occupies residues 36–56 (GLLLVLLALFLLLGVFLPWPG). At 57-367 (SPLLLFPNKV…ALESPLGKLQ (311 aa)) the chain is on the lumenal side. N-linked (GlcNAc...) asparagine glycans are attached at residues asparagine 85, asparagine 98, and asparagine 173. Positions 196-198 (DVD) match the DXD motif motif. Residues asparagine 228 and asparagine 292 are each glycosylated (N-linked (GlcNAc...) asparagine).

It belongs to the glycosyltransferase 77 family. It depends on Mn(2+) as a cofactor. Requires Mg(2+) as cofactor. Post-translationally, glycosylated. In terms of tissue distribution, expressed in roots, rosette leaves, stems and flowers.

Its subcellular location is the golgi apparatus membrane. Catalyzes the transfer of D-xylose from UDP-alpha-D-xylose onto L-fucose. Probably involved in the biosynthesis of rhamnogalacturonan II (RG-II) through xylosylation of the internal fucose moiety of the A-chain of RG-II, a structurally complex pectic polysaccharide of the primary cell wall. RG-II is essential for the cell wall integrity of rapidly growing tissues such as roots and pollen tube growth and elongation. The sequence is that of UDP-D-xylose:L-fucose alpha-1,3-D-xylosyltransferase from Arabidopsis thaliana (Mouse-ear cress).